Reading from the N-terminus, the 647-residue chain is Threonine--tRNA ligase (647 aa).

The 61-residue stretch at 1 to 61 (MIKITFPDGA…TEDGAIEIVT (61 aa)) folds into the TGS domain. The interval 242–540 (DHRKLGKELD…LIENYKGAFP (299 aa)) is catalytic. Zn(2+) is bound by residues Cys336, His387, and His517.

It belongs to the class-II aminoacyl-tRNA synthetase family. In terms of assembly, homodimer. It depends on Zn(2+) as a cofactor.

It is found in the cytoplasm. The enzyme catalyses tRNA(Thr) + L-threonine + ATP = L-threonyl-tRNA(Thr) + AMP + diphosphate + H(+). Functionally, catalyzes the attachment of threonine to tRNA(Thr) in a two-step reaction: L-threonine is first activated by ATP to form Thr-AMP and then transferred to the acceptor end of tRNA(Thr). Also edits incorrectly charged L-seryl-tRNA(Thr). This Streptococcus sanguinis (strain SK36) protein is Threonine--tRNA ligase.